Here is a 557-residue protein sequence, read N- to C-terminus: Membrane protein insertase YidC (557 aa).

The next 5 membrane-spanning stretches (helical) occupy residues 6–26, 219–239, 367–387, 437–457, and 514–534; these read TILWAVFSLSGLMLYNNWQVH, IGPFGGAFSASTFTGPAIYTD, IVGNWGWSIILLTVLIKLAFF, LGGCLPVVIQIPVFISLYWVL, and MPIVFSIMFFFFPAGLVLYWV.

Belongs to the OXA1/ALB3/YidC family. Type 1 subfamily. Interacts with the Sec translocase complex via SecD. Specifically interacts with transmembrane segments of nascent integral membrane proteins during membrane integration.

It localises to the cell inner membrane. Functionally, required for the insertion and/or proper folding and/or complex formation of integral membrane proteins into the membrane. Involved in integration of membrane proteins that insert both dependently and independently of the Sec translocase complex, as well as at least some lipoproteins. Aids folding of multispanning membrane proteins. This is Membrane protein insertase YidC from Polynucleobacter asymbioticus (strain DSM 18221 / CIP 109841 / QLW-P1DMWA-1) (Polynucleobacter necessarius subsp. asymbioticus).